The primary structure comprises 216 residues: Vascular endothelial growth factor A (216 aa).

The N-terminal stretch at 1-26 (MNFLLTWIHWGLAALLYFHNAKVLQA) is a signal peptide. Disulfide bonds link Cys-52–Cys-94, Cys-83–Cys-128, and Cys-87–Cys-130. A glycan (N-linked (GlcNAc...) asparagine) is linked at Asn-101. Residues 140-161 (QEKKSKREKGKGQKRKRKRGRY) are disordered. Residues 145 to 161 (KREKGKGQKRKRKRGRY) are compositionally biased toward basic residues.

It belongs to the PDGF/VEGF growth factor family. Homodimer; disulfide-linked. Also found as heterodimer with PGF. Interacts to the FLT1/VEGFR1 and KDR/VEGFR2 receptors, heparan sulfate and heparin. In terms of tissue distribution, expressed in venom gland, heart, brain, liver, skeletal muscle and kidney.

The protein localises to the secreted. Growth factor active in angiogenesis, vasculogenesis and endothelial cell growth. Induces endothelial cell proliferation, promotes cell migration, inhibits apoptosis and induces permeabilization of blood vessels. In Protobothrops flavoviridis (Habu), this protein is Vascular endothelial growth factor A.